A 228-amino-acid chain; its full sequence is Putative lipoprotein LprH (228 aa).

A signal peptide spans 1-27; the sequence is MACLGRPGCRGWAGASLVLVVVLALAA. Cys28 carries N-palmitoyl cysteine lipidation. Cys28 carries S-diacylglycerol cysteine lipidation. Residues 191–211 form a helical membrane-spanning segment; it reads GLAVVPHAVLVLSACGFKPGF.

The protein resides in the cell membrane. This Mycobacterium bovis (strain ATCC BAA-935 / AF2122/97) protein is Putative lipoprotein LprH (lprH).